A 309-amino-acid chain; its full sequence is UPF0282 protein Saci_0277 (309 aa).

Belongs to the UPF0282 family.

In Sulfolobus acidocaldarius (strain ATCC 33909 / DSM 639 / JCM 8929 / NBRC 15157 / NCIMB 11770), this protein is UPF0282 protein Saci_0277.